A 368-amino-acid polypeptide reads, in one-letter code: 1-deoxy-D-xylulose 5-phosphate reductoisomerase (368 aa).

The NADPH site is built by threonine 7, glycine 8, serine 9, isoleucine 10, glycine 31, lysine 32, asparagine 33, and asparagine 113. A 1-deoxy-D-xylulose 5-phosphate-binding site is contributed by lysine 114. Glutamate 115 is a binding site for NADPH. Residue aspartate 133 coordinates Mn(2+). 4 residues coordinate 1-deoxy-D-xylulose 5-phosphate: serine 134, glutamate 135, serine 158, and histidine 181. Position 135 (glutamate 135) interacts with Mn(2+). Glycine 187 is a binding site for NADPH. Residues serine 194, asparagine 199, lysine 200, and glutamate 203 each contribute to the 1-deoxy-D-xylulose 5-phosphate site. Residue glutamate 203 participates in Mn(2+) binding.

The protein belongs to the DXR family. Mg(2+) is required as a cofactor. The cofactor is Mn(2+).

It catalyses the reaction 2-C-methyl-D-erythritol 4-phosphate + NADP(+) = 1-deoxy-D-xylulose 5-phosphate + NADPH + H(+). The protein operates within isoprenoid biosynthesis; isopentenyl diphosphate biosynthesis via DXP pathway; isopentenyl diphosphate from 1-deoxy-D-xylulose 5-phosphate: step 1/6. Catalyzes the NADPH-dependent rearrangement and reduction of 1-deoxy-D-xylulose-5-phosphate (DXP) to 2-C-methyl-D-erythritol 4-phosphate (MEP). This chain is 1-deoxy-D-xylulose 5-phosphate reductoisomerase, found in Helicobacter pylori (strain Shi470).